A 337-amino-acid chain; its full sequence is Inositol 2-dehydrogenase (337 aa).

It belongs to the Gfo/Idh/MocA family. Homotetramer.

It catalyses the reaction myo-inositol + NAD(+) = scyllo-inosose + NADH + H(+). Functionally, involved in the oxidation of myo-inositol (MI) to 2-keto-myo-inositol (2KMI or 2-inosose). This Klebsiella pneumoniae (strain 342) protein is Inositol 2-dehydrogenase.